The following is a 123-amino-acid chain: Large ribosomal subunit protein bL12 (123 aa).

Belongs to the bacterial ribosomal protein bL12 family. Homodimer. Part of the ribosomal stalk of the 50S ribosomal subunit. Forms a multimeric L10(L12)X complex, where L10 forms an elongated spine to which 2 to 4 L12 dimers bind in a sequential fashion. Binds GTP-bound translation factors.

Forms part of the ribosomal stalk which helps the ribosome interact with GTP-bound translation factors. Is thus essential for accurate translation. In Pseudoalteromonas atlantica (strain T6c / ATCC BAA-1087), this protein is Large ribosomal subunit protein bL12.